The primary structure comprises 112 residues: UPF0342 protein SSA_1465 (112 aa).

It belongs to the UPF0342 family.

This Streptococcus sanguinis (strain SK36) protein is UPF0342 protein SSA_1465.